The sequence spans 77 residues: Acyl carrier protein (77 aa).

Residues 2 to 77 (SNIEERVKKI…AAIDYVNSAQ (76 aa)) enclose the Carrier domain. At Ser37 the chain carries O-(pantetheine 4'-phosphoryl)serine.

Belongs to the acyl carrier protein (ACP) family. Post-translationally, 4'-phosphopantetheine is transferred from CoA to a specific serine of apo-ACP by AcpS. This modification is essential for activity because fatty acids are bound in thioester linkage to the sulfhydryl of the prosthetic group.

The protein localises to the cytoplasm. The protein operates within lipid metabolism; fatty acid biosynthesis. Carrier of the growing fatty acid chain in fatty acid biosynthesis. The polypeptide is Acyl carrier protein (Vibrio campbellii (strain ATCC BAA-1116)).